A 354-amino-acid polypeptide reads, in one-letter code: MFYYIYELLNFNIFQYITVRAGFSFFIAFCLTVYLMPKFIAWAKAKNAAQPIYELAPQTHQKKAKTPTMGGLVFIGAAVFATLLCARLDNVFVVASLLCLVGFSALGFKDDLNKILGGKNHDGLSPRAKLAVQVLIGLVVSSLLYFHGELGSKFYLPFYKFALLDLGVFAIVFWTIVIVAASNAVNLTDGLDGLASVPAIFSLLTLGVFAYICGHAVFSTYLLLPKIVGVGETVIIAAALIGSLMGFLWFNCHPAEVFMGDSGSLSVGAYIGLMGVMTKNEILLIIIGFVFVMETLSVILQVGSFKIFKKRIFLMAPIHHHFEIKGWVENKIIVRFWLIAILANLIALTALKIR.

The next 10 helical transmembrane spans lie at F23–A43, T66–A86, L88–F108, L130–L150, F161–A181, G193–C213, V230–F250, V257–M277, I282–V302, and K331–L351.

This sequence belongs to the glycosyltransferase 4 family. MraY subfamily. The cofactor is Mg(2+).

Its subcellular location is the cell inner membrane. The catalysed reaction is UDP-N-acetyl-alpha-D-muramoyl-L-alanyl-gamma-D-glutamyl-meso-2,6-diaminopimeloyl-D-alanyl-D-alanine + di-trans,octa-cis-undecaprenyl phosphate = di-trans,octa-cis-undecaprenyl diphospho-N-acetyl-alpha-D-muramoyl-L-alanyl-D-glutamyl-meso-2,6-diaminopimeloyl-D-alanyl-D-alanine + UMP. Its pathway is cell wall biogenesis; peptidoglycan biosynthesis. In terms of biological role, catalyzes the initial step of the lipid cycle reactions in the biosynthesis of the cell wall peptidoglycan: transfers peptidoglycan precursor phospho-MurNAc-pentapeptide from UDP-MurNAc-pentapeptide onto the lipid carrier undecaprenyl phosphate, yielding undecaprenyl-pyrophosphoryl-MurNAc-pentapeptide, known as lipid I. The sequence is that of Phospho-N-acetylmuramoyl-pentapeptide-transferase from Campylobacter curvus (strain 525.92).